A 517-amino-acid chain; its full sequence is FAD-dependent monooxygenase dmxR9 (517 aa).

FAD-binding residues include Val-96 and Arg-162. Catalysis depends on residues Arg-243 and Tyr-270. Residues Asp-365 and Ala-378 each coordinate FAD.

Belongs to the paxM FAD-dependent monooxygenase family. The cofactor is FAD.

It functions in the pathway secondary metabolite biosynthesis. FAD-dependent monooxygenase; part of the gene cluster that mediates the biosynthesis of the dimeric xanthones cryptosporioptides. The pathway begins with the synthesis of atrochrysone thioester by the polyketide synthase dmx-nrPKS. The atrochrysone carboxyl ACP thioesterase dmxR1 then breaks the thioester bond and releases the atrochrysone carboxylic acid from dmx-nrPKS. Atrochrysone carboxylic acid is decarboxylated by the decarboxylase dmxR15, and oxidized by the anthrone oxygenase dmxR16 to yield emodin. Emodin is then reduced to emodin hydroquinone by the oxidoreductase dmxR7. A-ring reduction by the short chain dehydrogenase dmxR18, dehydration by the scytalone dehydratase-like protein dmxR17 and probable spontaneous re-oxidation, results in overall deoxygenation to chrysophanol. Baeyer-Villiger oxidation by the Baeyer-Villiger monooxygenase (BVMO) dmxR6 then yields monodictylactone in equilibrium with monodictyphenone. In the case of the cryptosporioptides biosynthesis, monodictylactone is reduced at C-12 to an alcohol (by the short chain dehydrogenases dmxR12 or dmxR8) and hydroxylated at C-5 by dmxR9, yielding the electron-rich aromatic which could eliminate H(2)O to form the ortho-quinonemethide, followed by tautomerisation to paraquinone and complete the formal reduction to produce the 10-methylgroup. Conjugate addition of C-4a-OH to the resulting paraquinone by the monooxygenase dmxR10 then gives cyclohexadienone, which is then reduced at C-5 by the short chain dehydrogenase dmxR3 to give the dihydroxanthone. The 6,7-epoxide in the cryptosporioptides could be introduced by the cytochrome P450 monooxygenase dmxL3. The highly reducing PKS dmxL2 manufactures butyrate, which is further carboxylated by dmxL1 to form ethylmalonate. It is not yet clear whether the carboxylation occurs while the butyrate is attached to the ACP of dmxL2, but this unusual fungal metabolite could then be esterified to O-5 by the O-acetyltransferase dmxR13. Finally, dimerization performed by dmxR5 gives the observed dimers cryptosporioptides A, B and C as the final products of the pathway. In Cryptosporiopsis sp. (strain 8999), this protein is FAD-dependent monooxygenase dmxR9.